The sequence spans 354 residues: Replication factor C subunit 5 (354 aa).

40–47 serves as a coordination point for ATP; sequence YGPSGSGK.

Belongs to the activator 1 small subunits family. Heterotetramer of subunits RFC2, RFC3, RFC4 and RFC5 that can form a complex with RFC1. Expressed in roots, leaves, shoot apical meristem (SAM), flag leaves and panicles.

It localises to the nucleus. May be involved in DNA replication and thus regulate cell proliferation. The chain is Replication factor C subunit 5 (RFC5) from Oryza sativa subsp. japonica (Rice).